Here is a 62-residue protein sequence, read N- to C-terminus: MFTMKKTLLVLFFLGVVSLSLCVEERDADEEDGGEVMEEEVKRGALRGCWTKSYPPKPCKGK.

The signal sequence occupies residues 1–22 (MFTMKKTLLVLFFLGVVSLSLC). The propeptide occupies 23–43 (VEERDADEEDGGEVMEEEVKR). A disulfide bridge links cysteine 49 with cysteine 59. A Lysine amide modification is found at lysine 60.

It belongs to the frog skin active peptide (FSAP) family. Brevinin subfamily. In terms of tissue distribution, expressed by the skin granular glands.

It localises to the secreted. Has antibacterial activity against Gram-positive bacteria B.megaterium Bm11, S.lentus and M.luteus, and Gram-negative bacteria E.coli D22, Y.pseudotuberculosis YP III and P.syringae pv tabaci, and antifungal activity against C.albicans ATCC 10231, C.tropicalis, C.guiller-mondii and P.nicotianae spores. Has weak hemolytic activity. The mature peptide inserts into the hydrophobic core of the bacterial cell membrane and increases permeability without disrupting membrane integrity. Probably binds to the outer membrane surface before aggregating to form transmembrane pores. In Rana temporaria (European common frog), this protein is Ranacyclin-T (RNCT).